A 344-amino-acid polypeptide reads, in one-letter code: 4-hydroxy-3-methylbut-2-en-1-yl diphosphate synthase (flavodoxin) (344 aa).

Residues Cys253, Cys256, Cys288, and Glu295 each contribute to the [4Fe-4S] cluster site.

The protein belongs to the IspG family. Requires [4Fe-4S] cluster as cofactor.

It catalyses the reaction (2E)-4-hydroxy-3-methylbut-2-enyl diphosphate + oxidized [flavodoxin] + H2O + 2 H(+) = 2-C-methyl-D-erythritol 2,4-cyclic diphosphate + reduced [flavodoxin]. It functions in the pathway isoprenoid biosynthesis; isopentenyl diphosphate biosynthesis via DXP pathway; isopentenyl diphosphate from 1-deoxy-D-xylulose 5-phosphate: step 5/6. Functionally, converts 2C-methyl-D-erythritol 2,4-cyclodiphosphate (ME-2,4cPP) into 1-hydroxy-2-methyl-2-(E)-butenyl 4-diphosphate. In Thermotoga maritima (strain ATCC 43589 / DSM 3109 / JCM 10099 / NBRC 100826 / MSB8), this protein is 4-hydroxy-3-methylbut-2-en-1-yl diphosphate synthase (flavodoxin).